The primary structure comprises 477 residues: Oleate hydroxylase FAH12 (477 aa).

Residues 26-48 (YESSAAVSPAESPRTSASSTSLS) form a disordered region. Over residues 27–48 (ESSAAVSPAESPRTSASSTSLS) the composition is skewed to low complexity. The next 2 helical transmembrane spans lie at 101-118 (AYVL…YLFH) and 133-153 (FVLW…LWVI). The short motif at 155–159 (HECGH) is the Histidine box-1 element. The helical transmembrane segment at 167–187 (FISDLTGWVIHSALLVPYFSW) threads the bilayer. Residues 191 to 195 (HSAHH) carry the Histidine box-2 motif. 3 consecutive transmembrane segments (helical) span residues 234 to 254 (PIYT…SYLM), 299 to 319 (YIVL…YLGN), and 327 to 347 (AVWY…ITFL).

The protein belongs to the fatty acid desaturase type 1 family.

It is found in the microsome membrane. The catalysed reaction is (9Z)-octadecenoate + AH2 + O2 = (12R)-hydroxy-(9Z)-octadecenoate + A + H2O. It participates in lipid metabolism; monounsaturated fatty acid biosynthesis. Its function is as follows. Oleate hydroxylase involved in the biosynthesis of ricinoleate (12-hydroxy-cis-9-octadecenoate), that is present at high levels in C.purpurea sclerotium tissue. Exhibits delta(12) hydroxylase activity on 16C and 18C monounsaturated fatty acids (i.e. oleic and palmitoleic acids), and, to a lower extent, gamma(3) hydroxylase activity on ricinoleate. The polypeptide is Oleate hydroxylase FAH12 (Claviceps purpurea (Ergot fungus)).